Consider the following 164-residue polypeptide: Interleukin-10 (164 aa).

The first 18 residues, 1 to 18 (MPSSALLCCLIFLARVAA), serve as a signal peptide directing secretion. Disulfide bonds link Cys30–Cys126 and Cys80–Cys132. N-linked (GlcNAc...) asparagine glycosylation is present at Asn134.

Belongs to the IL-10 family. Homodimer. Interacts with IL10RA and IL10RB.

The protein localises to the secreted. In terms of biological role, major immune regulatory cytokine that acts on many cells of the immune system where it has profound anti-inflammatory functions, limiting excessive tissue disruption caused by inflammation. Mechanistically, IL10 binds to its heterotetrameric receptor comprising IL10RA and IL10RB leading to JAK1 and STAT2-mediated phosphorylation of STAT3. In turn, STAT3 translocates to the nucleus where it drives expression of anti-inflammatory mediators. Targets antigen-presenting cells (APCs) such as macrophages and monocytes and inhibits their release of pro-inflammatory cytokines including granulocyte-macrophage colony-stimulating factor /GM-CSF, granulocyte colony-stimulating factor/G-CSF, IL-1 alpha, IL-1 beta, IL-6, IL-8 and TNF-alpha. Also interferes with antigen presentation by reducing the expression of MHC-class II and co-stimulatory molecules, thereby inhibiting their ability to induce T cell activation. In addition, controls the inflammatory response of macrophages by reprogramming essential metabolic pathways including mTOR signaling. The protein is Interleukin-10 (IL10) of Orcinus orca (Killer whale).